The chain runs to 137 residues: Large ribosomal subunit protein uL16 (137 aa).

This sequence belongs to the universal ribosomal protein uL16 family. As to quaternary structure, part of the 50S ribosomal subunit.

In terms of biological role, binds 23S rRNA and is also seen to make contacts with the A and possibly P site tRNAs. In Methylorubrum extorquens (strain CM4 / NCIMB 13688) (Methylobacterium extorquens), this protein is Large ribosomal subunit protein uL16.